A 363-amino-acid chain; its full sequence is Chorismate synthase (363 aa).

Residue Arg48 coordinates NADP(+). FMN is bound by residues Arg125–Ser127, Asn238–Ala239, Gly278, Lys293–Ser297, and Arg319.

This sequence belongs to the chorismate synthase family. As to quaternary structure, homotetramer. FMNH2 serves as cofactor.

It catalyses the reaction 5-O-(1-carboxyvinyl)-3-phosphoshikimate = chorismate + phosphate. The protein operates within metabolic intermediate biosynthesis; chorismate biosynthesis; chorismate from D-erythrose 4-phosphate and phosphoenolpyruvate: step 7/7. In terms of biological role, catalyzes the anti-1,4-elimination of the C-3 phosphate and the C-6 proR hydrogen from 5-enolpyruvylshikimate-3-phosphate (EPSP) to yield chorismate, which is the branch point compound that serves as the starting substrate for the three terminal pathways of aromatic amino acid biosynthesis. This reaction introduces a second double bond into the aromatic ring system. The polypeptide is Chorismate synthase (Acinetobacter baylyi (strain ATCC 33305 / BD413 / ADP1)).